The chain runs to 127 residues: Large ribosomal subunit protein bL20 (127 aa).

Belongs to the bacterial ribosomal protein bL20 family.

Functionally, binds directly to 23S ribosomal RNA and is necessary for the in vitro assembly process of the 50S ribosomal subunit. It is not involved in the protein synthesizing functions of that subunit. The sequence is that of Large ribosomal subunit protein bL20 from Corynebacterium aurimucosum (strain ATCC 700975 / DSM 44827 / CIP 107346 / CN-1) (Corynebacterium nigricans).